The primary structure comprises 1154 residues: PDZ domain-containing protein 8 (1154 aa).

Residues 2–24 (GLLLMILASAVLGSFLTLLAQFF) traverse the membrane as a helical segment. The tract at residues 66–90 (DEEPSGAAPEGGATPTAAPETPAPP) is disordered. Residues 70–85 (SGAAPEGGATPTAAPE) show a composition bias toward low complexity. An SMP-LTD domain is found at 91–294 (TRETCYFLNA…LPNYKIRFKP (204 aa)). The region spanning 366-449 (TVELIKGNLQ…RVLVYYERPV (84 aa)) is the PDZ domain. Phosphoserine is present on residues Ser-496, Ser-521, and Ser-538. Residues 548–612 (GSHPLPPKIQ…SADAPNQAEP (65 aa)) form a disordered region. The segment at 840–891 (KHSFQDTQFQNPTWCDYCKKKVWTKAASQCMFCAYVCHKKCQEKCLAETSVC) adopts a Phorbol-ester/DAG-type zinc-finger fold. The segment at 955-999 (RLSEPGTDLVEPSPKHTPNTSDNEGSDTEVCGPNSPSKRGNSTGI) is disordered. Phosphoserine is present on residues Ser-967 and Ser-980. Polar residues predominate over residues 988–998 (NSPSKRGNSTG). A coiled-coil region spans residues 1028–1063 (PTEERIQKLEFMLDKLQNEIDQELEHNNSLVREEKE). Residues 1132-1144 (SQLIDSQPFSSIS) show a composition bias toward polar residues. Positions 1132–1154 (SQLIDSQPFSSISDDLFGPSESV) are disordered.

As to quaternary structure, interacts with MSN. In terms of assembly, (Microbial infection) Interacts with HIV-1 Gag polyprotein p55.

The protein resides in the endoplasmic reticulum membrane. In terms of biological role, molecular tethering protein that connects endoplasmic reticulum and mitochondria membranes. PDZD8-dependent endoplasmic reticulum-mitochondria membrane tethering is essential for endoplasmic reticulum-mitochondria Ca(2+) transfer. In neurons, involved in the regulation of dendritic Ca(2+) dynamics by regulating mitochondrial Ca(2+) uptake in neurons. Plays an indirect role in the regulation of cell morphology and cytoskeletal organization. May inhibit herpes simplex virus 1 infection at an early stage. This is PDZ domain-containing protein 8 from Homo sapiens (Human).